Here is a 447-residue protein sequence, read N- to C-terminus: Alkylglycerol monooxygenase (447 aa).

Helical transmembrane passes span 43–63 (ATPF…ILKG) and 111–131 (WDSP…YYWF). The 132-residue stretch at 118-249 (YLTFLGVDFG…LIIWDRIFGT (132 aa)) folds into the Fatty acid hydroxylase domain. Residues 132 to 136 (HRMAH) carry the Histidine box-1 motif. A Histidine box-2 motif is present at residues 145–149 (HQAHH). Residues 170–190 (SWVFYCPLALFVPPSVFAVHI) form a helical membrane-spanning segment. Residues 221-225 (HRVHH) carry the Histidine box-3 motif. The next 3 helical transmembrane spans lie at 334–354 (FLKI…EETF), 363–383 (VTIL…GFLL), and 413–433 (IESL…FWGV).

It belongs to the sterol desaturase family. TMEM195 subfamily. Fe cation is required as a cofactor.

It localises to the endoplasmic reticulum membrane. The enzyme catalyses 1-O-(1,2-saturated-alkyl)-sn-glycerol + (6R)-L-erythro-5,6,7,8-tetrahydrobiopterin + O2 = a 1-(1-hydroxyalkyl)-sn-glycerol + (6R)-L-erythro-6,7-dihydrobiopterin + H2O. In terms of biological role, glyceryl-ether monooxygenase that cleaves the O-alkyl bond of ether lipids. Ether lipids are essential components of brain membranes. This chain is Alkylglycerol monooxygenase (Agmo), found in Rattus norvegicus (Rat).